An 86-amino-acid polypeptide reads, in one-letter code: YcgL domain-containing protein XCC3997 (86 aa).

Residues 1–83 enclose the YcgL domain; sequence MHAYVYKSQR…PKTVVLAGEC (83 aa).

This is YcgL domain-containing protein XCC3997 from Xanthomonas campestris pv. campestris (strain ATCC 33913 / DSM 3586 / NCPPB 528 / LMG 568 / P 25).